Consider the following 129-residue polypeptide: Large ribosomal subunit protein bL17 (129 aa).

This sequence belongs to the bacterial ribosomal protein bL17 family. As to quaternary structure, part of the 50S ribosomal subunit. Contacts protein L32.

This chain is Large ribosomal subunit protein bL17, found in Yersinia pseudotuberculosis serotype O:1b (strain IP 31758).